Reading from the N-terminus, the 369-residue chain is Beta-1,4-galactosyltransferase 2 (369 aa).

Over methionine 1–alanine 15 the chain is Cytoplasmic. The chain crosses the membrane as a helical; Signal-anchor for type II membrane protein span at residues valine 16–alanine 36. Over glutamine 37–glycine 369 the chain is Lumenal. Polar residues predominate over residues serine 59–glycine 75. The interval serine 59–valine 90 is disordered. Asparagine 63 and asparagine 68 each carry an N-linked (GlcNAc...) asparagine glycan. Cysteines 94 and 136 form a disulfide. UDP-alpha-D-galactose is bound by residues proline 147 to arginine 151, phenylalanine 186 to arginine 188, valine 214 to aspartate 215, and tryptophan 275. Cysteine 208 and cysteine 227 are disulfide-bonded. Mn(2+) is bound at residue aspartate 215. Glycine 277–aspartate 280 contributes to the N-acetyl-D-glucosamine binding site. Mn(2+) is bound at residue histidine 308. UDP-alpha-D-galactose is bound at residue histidine 308 to arginine 310. Arginine 320 is a binding site for N-acetyl-D-glucosamine. Asparagine 354 carries N-linked (GlcNAc...) asparagine glycosylation.

This sequence belongs to the glycosyltransferase 7 family. The cofactor is Mn(2+).

It is found in the golgi apparatus. It localises to the golgi stack membrane. It catalyses the reaction D-glucose + UDP-alpha-D-galactose = lactose + UDP + H(+). The enzyme catalyses an N-acetyl-beta-D-glucosaminyl derivative + UDP-alpha-D-galactose = a beta-D-galactosyl-(1-&gt;4)-N-acetyl-beta-D-glucosaminyl derivative + UDP + H(+). The catalysed reaction is N-acetyl-D-glucosamine + UDP-alpha-D-galactose = beta-D-galactosyl-(1-&gt;4)-N-acetyl-D-glucosamine + UDP + H(+). It functions in the pathway protein modification; protein glycosylation. In terms of biological role, responsible for the synthesis of complex-type N-linked oligosaccharides in many glycoproteins as well as the carbohydrate moieties of glycolipids. Can produce lactose. The chain is Beta-1,4-galactosyltransferase 2 (B4GALT2) from Cricetulus griseus (Chinese hamster).